The primary structure comprises 399 residues: Acetate kinase (399 aa).

Residue Asn9 coordinates Mg(2+). Lys16 serves as a coordination point for ATP. Substrate is bound at residue Arg90. The active-site Proton donor/acceptor is Asp147. ATP-binding positions include 207-211 (HLGNG), 281-283 (DFR), and 333-337 (GVGEN). Glu387 contributes to the Mg(2+) binding site.

It belongs to the acetokinase family. As to quaternary structure, homodimer. Mg(2+) serves as cofactor. It depends on Mn(2+) as a cofactor.

Its subcellular location is the cytoplasm. The enzyme catalyses acetate + ATP = acetyl phosphate + ADP. It participates in metabolic intermediate biosynthesis; acetyl-CoA biosynthesis; acetyl-CoA from acetate: step 1/2. Catalyzes the formation of acetyl phosphate from acetate and ATP. Can also catalyze the reverse reaction. The sequence is that of Acetate kinase from Mycobacterium sp. (strain KMS).